The sequence spans 352 residues: MEIDILSLFPDYFASPLQATILGRAIKQGALSVRSRDIREFGLGKWKQVDDSPYNGEGMLLMAEPVVQAIRSIRRKKSKVIYLSPQGQLLSAKKSRELASCSHLVLLCGHYEGIDERALTAEVDEEISIGDYVLTNGCAAALVLVDALARFIPGVLGNQESAEYDSLENGLLEGPQYTRPRVFEGESVPEVLLCGDHQKIADWRKQVSLERTRERRPDLYLQYFYGNSACLSTQEDLPRIEVVSPKTFSVVLEVQDLRKAKKFYSRMFGKECWDGDKLFLLGKTSLYLQQTKETRGPTTVFIELETDHDFVRFLKRWEMLGGELGEQGTGGFPLRQVFDLDGHIWVVSCVQK.

Residues Gly-109 and 129 to 134 (IGDYVL) contribute to the S-adenosyl-L-methionine site.

Belongs to the RNA methyltransferase TrmD family. Homodimer.

The protein resides in the cytoplasm. It catalyses the reaction guanosine(37) in tRNA + S-adenosyl-L-methionine = N(1)-methylguanosine(37) in tRNA + S-adenosyl-L-homocysteine + H(+). In terms of biological role, specifically methylates guanosine-37 in various tRNAs. The sequence is that of tRNA (guanine-N(1)-)-methyltransferase from Chlamydia trachomatis serovar A (strain ATCC VR-571B / DSM 19440 / HAR-13).